Reading from the N-terminus, the 153-residue chain is UPF0756 membrane protein BCB4264_A4705 (153 aa).

4 consecutive transmembrane segments (helical) span residues 8-28 (FLFI…TVAI), 54-74 (LGVT…EIGF), 87-107 (WIAL…VQLL), and 117-137 (LVFG…GPLI).

It belongs to the UPF0756 family.

The protein localises to the cell membrane. This chain is UPF0756 membrane protein BCB4264_A4705, found in Bacillus cereus (strain B4264).